Reading from the N-terminus, the 287-residue chain is Nucleotide-binding protein MXAN_6564 (287 aa).

13–20 is an ATP binding site; that stretch reads GMSGSGKS. 62–65 is a GTP binding site; that stretch reads DVRE.

It belongs to the RapZ-like family.

Its function is as follows. Displays ATPase and GTPase activities. This Myxococcus xanthus (strain DK1622) protein is Nucleotide-binding protein MXAN_6564.